The chain runs to 205 residues: N-(5'-phosphoribosyl)anthranilate isomerase (205 aa).

This sequence belongs to the TrpF family.

It carries out the reaction N-(5-phospho-beta-D-ribosyl)anthranilate = 1-(2-carboxyphenylamino)-1-deoxy-D-ribulose 5-phosphate. It participates in amino-acid biosynthesis; L-tryptophan biosynthesis; L-tryptophan from chorismate: step 3/5. This is N-(5'-phosphoribosyl)anthranilate isomerase from Phocaeicola vulgatus (strain ATCC 8482 / DSM 1447 / JCM 5826 / CCUG 4940 / NBRC 14291 / NCTC 11154) (Bacteroides vulgatus).